The sequence spans 69 residues: Large ribosomal subunit protein uL29 (69 aa).

Belongs to the universal ribosomal protein uL29 family.

The sequence is that of Large ribosomal subunit protein uL29 from Staphylococcus haemolyticus (strain JCSC1435).